Consider the following 183-residue polypeptide: Ribosomal RNA small subunit methyltransferase G (183 aa).

S-adenosyl-L-methionine is bound by residues Gly-60, Phe-65, 111-112 (IE), and Arg-125.

The protein belongs to the methyltransferase superfamily. RNA methyltransferase RsmG family.

It is found in the cytoplasm. It carries out the reaction guanosine(527) in 16S rRNA + S-adenosyl-L-methionine = N(7)-methylguanosine(527) in 16S rRNA + S-adenosyl-L-homocysteine. Functionally, specifically methylates the N7 position of guanine in position 527 of 16S rRNA. This Campylobacter hominis (strain ATCC BAA-381 / DSM 21671 / CCUG 45161 / LMG 19568 / NCTC 13146 / CH001A) protein is Ribosomal RNA small subunit methyltransferase G.